The primary structure comprises 273 residues: Probable cysteine-rich repeat secretory protein 6 (273 aa).

The N-terminal stretch at 1–21 (MTRIIDVSLFCFFLFSLGAMS) is a signal peptide. Gnk2-homologous domains are found at residues 22-122 (QPSQ…DNSF) and 128-241 (DSPA…ISAL).

This sequence belongs to the cysteine-rich repeat secretory protein family.

Its subcellular location is the secreted. The sequence is that of Probable cysteine-rich repeat secretory protein 6 (CRRSP6) from Arabidopsis thaliana (Mouse-ear cress).